Consider the following 667-residue polypeptide: DNA ligase (667 aa).

NAD(+) contacts are provided by residues 30–34, 79–80, and glutamate 112; these read DSEYD and SL. The N6-AMP-lysine intermediate role is filled by lysine 114. Positions 135, 172, 289, and 313 each coordinate NAD(+). 4 residues coordinate Zn(2+): cysteine 407, cysteine 410, cysteine 425, and cysteine 431. A BRCT domain is found at 590–667; it reads VRDNPLKGKT…SENEFLALLA (78 aa).

This sequence belongs to the NAD-dependent DNA ligase family. LigA subfamily. Mg(2+) serves as cofactor. It depends on Mn(2+) as a cofactor.

The catalysed reaction is NAD(+) + (deoxyribonucleotide)n-3'-hydroxyl + 5'-phospho-(deoxyribonucleotide)m = (deoxyribonucleotide)n+m + AMP + beta-nicotinamide D-nucleotide.. Its function is as follows. DNA ligase that catalyzes the formation of phosphodiester linkages between 5'-phosphoryl and 3'-hydroxyl groups in double-stranded DNA using NAD as a coenzyme and as the energy source for the reaction. It is essential for DNA replication and repair of damaged DNA. The sequence is that of DNA ligase from Histophilus somni (strain 2336) (Haemophilus somnus).